The chain runs to 524 residues: Bifunctional purine biosynthesis protein PurH (524 aa).

The 144-residue stretch at 1–144 folds into the MGS-like domain; it reads MTRRALVSVS…KNSAHVGVVV (144 aa).

It belongs to the PurH family.

The enzyme catalyses (6R)-10-formyltetrahydrofolate + 5-amino-1-(5-phospho-beta-D-ribosyl)imidazole-4-carboxamide = 5-formamido-1-(5-phospho-D-ribosyl)imidazole-4-carboxamide + (6S)-5,6,7,8-tetrahydrofolate. It catalyses the reaction IMP + H2O = 5-formamido-1-(5-phospho-D-ribosyl)imidazole-4-carboxamide. It participates in purine metabolism; IMP biosynthesis via de novo pathway; 5-formamido-1-(5-phospho-D-ribosyl)imidazole-4-carboxamide from 5-amino-1-(5-phospho-D-ribosyl)imidazole-4-carboxamide (10-formyl THF route): step 1/1. The protein operates within purine metabolism; IMP biosynthesis via de novo pathway; IMP from 5-formamido-1-(5-phospho-D-ribosyl)imidazole-4-carboxamide: step 1/1. The chain is Bifunctional purine biosynthesis protein PurH from Anaeromyxobacter sp. (strain K).